Here is an 895-residue protein sequence, read N- to C-terminus: MSATEPTNEKVDKIVSDDEDEDIDQLVADLQSNPGAGDEEEEEENDSSFKAVPEELLQTDPRVGLTDDEVTKRRKRYGLNQMAEEQENLVLKFVMFFVGPIQFVMEAAAVLAAGLEDWVDFGVICALLLLNAFVGFIQEYQAGSIVDELKKTLANSALVVRNGQLVEIPANEVVPGDILQLEDGTVIPTDGRIVSEDCLLQVDQSAITGESLAVDKRSGDSCYSSSTVKTGEAFMIVTATGDSTFVGRAAALVNKASAGTGHFTEVLNGIGTTLLVFVIVTLLVVWVACFYRTVRIVPILRYTLAITIIGVPVGLPAVVTTTMAVGAAYLAKKQAIVQKLSAIESLAGVEILCSDKTGTLTKNKLSLHEPYTVEGVEPDDLMLTACLAASRKKKGLDAIDKAFLKSLINYPRAKAALPKYKVIEFQPFDPVSKKVTAIVESPEGERIICVKGAPLFVLKTVEDDHPIPEDVHENYQNTVAEFASRGFRSLGVARKRGEGHWEILGIMPCMDPPRDDTAATVNEARRLGLRVKMLTGDAVGIAKETCRQLGLGTNIYDADRLGLSGGGDMAGSEIADFVENADGFAEGFPTNKYNAVEILQSRGYLVAMTGDGVNDAPSLKKADTGIAVEGATDAARSAADIVFLAPGLSAIIDALKTSRQIFHRMYSYVVYRIALSLHLELFLGLWIAILNRSLDINLIVFIAIFADVATLAIAYDNAPYDPKPVKWNLPRLWGMSIVLGIILAIGTWITLTTMLLPKGGIIQNFGGLDGILFLQISLTENWLIFVTRAQGPFWSSIPSWQLSGAVLIVDIIATCFTLFGWWSQNWTDIVTVVRTWIWSFGVFCVMGGAYYLMSTSEAFDNFCNGRKPQQHTDKRSLEDFLVSMQRVSTQHEKST.

Residues 1–53 (MSATEPTNEKVDKIVSDDEDEDIDQLVADLQSNPGAGDEEEEEENDSSFKAVP) are disordered. The Cytoplasmic portion of the chain corresponds to 1 to 92 (MSATEPTNEK…AEEQENLVLK (92 aa)). The segment covering 7-16 (TNEKVDKIVS) has biased composition (basic and acidic residues). Residues 37 to 46 (GDEEEEEEND) show a composition bias toward acidic residues. The helical transmembrane segment at 93–113 (FVMFFVGPIQFVMEAAAVLAA) threads the bilayer. The Extracellular segment spans residues 114–117 (GLED). The helical transmembrane segment at 118–137 (WVDFGVICALLLLNAFVGFI) threads the bilayer. Topologically, residues 138–268 (QEYQAGSIVD…GTGHFTEVLN (131 aa)) are cytoplasmic. The chain crosses the membrane as a helical span at residues 269-290 (GIGTTLLVFVIVTLLVVWVACF). The Extracellular portion of the chain corresponds to 291 to 301 (YRTVRIVPILR). Residues 302–324 (YTLAITIIGVPVGLPAVVTTTMA) traverse the membrane as a helical segment. Topologically, residues 325–696 (VGAAYLAKKQ…IAILNRSLDI (372 aa)) are cytoplasmic. Asp355 (4-aspartylphosphate intermediate) is an active-site residue. Mg(2+) contacts are provided by Asp611 and Asp615. The helical transmembrane segment at 697-715 (NLIVFIAIFADVATLAIAY) threads the bilayer. Residues 716-731 (DNAPYDPKPVKWNLPR) lie on the Extracellular side of the membrane. The chain crosses the membrane as a helical span at residues 732–751 (LWGMSIVLGIILAIGTWITL). At 752 to 801 (TTMLLPKGGIIQNFGGLDGILFLQISLTENWLIFVTRAQGPFWSSIPSWQ) the chain is on the cytoplasmic side. The helical transmembrane segment at 802-822 (LSGAVLIVDIIATCFTLFGWW) threads the bilayer. Topologically, residues 823-834 (SQNWTDIVTVVR) are extracellular. Residues 835 to 851 (TWIWSFGVFCVMGGAYY) traverse the membrane as a helical segment. Topologically, residues 852-895 (LMSTSEAFDNFCNGRKPQQHTDKRSLEDFLVSMQRVSTQHEKST) are cytoplasmic.

Belongs to the cation transport ATPase (P-type) (TC 3.A.3) family. Type IIIA subfamily.

It localises to the cell membrane. It carries out the reaction ATP + H2O + H(+)(in) = ADP + phosphate + 2 H(+)(out). In terms of biological role, the plasma membrane ATPase of plants and fungi is a hydrogen ion pump. The proton gradient it generates drives the active transport of nutrients by H(+)-symport. The resulting external acidification and/or internal alkinization may mediate growth responses. This Candida albicans (Yeast) protein is Plasma membrane ATPase 1 (PMA1).